The sequence spans 127 residues: uncharacterized protein (127 aa).

The chain crosses the membrane as a helical span at residues 84–103; sequence IALLSLFISLSIRITCFPFF.

The protein localises to the membrane. This is an uncharacterized protein from Saccharomyces cerevisiae (strain ATCC 204508 / S288c) (Baker's yeast).